A 623-amino-acid chain; its full sequence is Kelch repeat and BTB domain-containing protein 12 (623 aa).

A BTB domain is found at 31–98 (IDVVLTAEGE…MYNAALEINN (68 aa)). The BACK domain occupies 133 to 235 (CLGIYYFAKQ…NPSFLRQALR (103 aa)). Kelch repeat units lie at residues 386 to 436 (DLYV…TVNN), 437 to 492 (KLYV…VVNS), 494 to 547 (IYVL…STNA), and 553 to 603 (KLYV…LVAR).

The chain is Kelch repeat and BTB domain-containing protein 12 (KBTBD12) from Homo sapiens (Human).